A 346-amino-acid chain; its full sequence is N-acetyl-gamma-glutamyl-phosphate reductase (346 aa).

C149 is an active-site residue.

Belongs to the NAGSA dehydrogenase family. Type 1 subfamily.

Its subcellular location is the cytoplasm. The enzyme catalyses N-acetyl-L-glutamate 5-semialdehyde + phosphate + NADP(+) = N-acetyl-L-glutamyl 5-phosphate + NADPH + H(+). Its pathway is amino-acid biosynthesis; L-arginine biosynthesis; N(2)-acetyl-L-ornithine from L-glutamate: step 3/4. Catalyzes the NADPH-dependent reduction of N-acetyl-5-glutamyl phosphate to yield N-acetyl-L-glutamate 5-semialdehyde. The chain is N-acetyl-gamma-glutamyl-phosphate reductase from Pelobacter propionicus (strain DSM 2379 / NBRC 103807 / OttBd1).